A 410-amino-acid chain; its full sequence is Sulfate adenylyltransferase (410 aa).

The protein belongs to the sulfate adenylyltransferase family.

The catalysed reaction is sulfate + ATP + H(+) = adenosine 5'-phosphosulfate + diphosphate. Its pathway is sulfur metabolism; hydrogen sulfide biosynthesis; sulfite from sulfate: step 1/3. The protein is Sulfate adenylyltransferase of Syntrophobacter fumaroxidans (strain DSM 10017 / MPOB).